Here is a 601-residue protein sequence, read N- to C-terminus: Elongation factor 4 (601 aa).

One can recognise a tr-type G domain in the interval 2–184 (DLIRNFSIIA…EMIARVPPPT (183 aa)). Residues 14-19 (DHGKST) and 131-134 (NKID) contribute to the GTP site.

The protein belongs to the TRAFAC class translation factor GTPase superfamily. Classic translation factor GTPase family. LepA subfamily.

The protein resides in the cell inner membrane. The enzyme catalyses GTP + H2O = GDP + phosphate + H(+). Required for accurate and efficient protein synthesis under certain stress conditions. May act as a fidelity factor of the translation reaction, by catalyzing a one-codon backward translocation of tRNAs on improperly translocated ribosomes. Back-translocation proceeds from a post-translocation (POST) complex to a pre-translocation (PRE) complex, thus giving elongation factor G a second chance to translocate the tRNAs correctly. Binds to ribosomes in a GTP-dependent manner. In Polynucleobacter necessarius subsp. necessarius (strain STIR1), this protein is Elongation factor 4.